A 366-amino-acid chain; its full sequence is MELAEIRNELEKTAQQIKDFRGSLDLDSMEVRIAELEDQMLDPNFWNDQQAAQKVINESNGYKETYQAFHALEEEQESMEISLELLKEEADEDLQEELEKDIKAYMATISEFELKLMLSDPYDKNNAILELHPGAGGTESQDWGSMLLRMYQRWSEKKGFKVEMLDYQAGDEAGIKSVTLLIKGHNAYGYLKAEKGVHRLVRISPFDSSGRRHTSFVSVDVMPELDDDIEIEVRTEDLKIDTYRATGAGGQHINTTDSAVRMTHIPSGIVVTCQSERSQLKNREQAMKMLKTKLYQKEQEEKERELAEIRGEQKEIGWGSQIRSYVFHPYSMVKDHRTNYETGNIQAVMDGDLDEFINAYLRSRIG.

Gln251 carries the N5-methylglutamine modification.

Belongs to the prokaryotic/mitochondrial release factor family. Methylated by PrmC. Methylation increases the termination efficiency of RF2.

The protein localises to the cytoplasm. In terms of biological role, peptide chain release factor 2 directs the termination of translation in response to the peptide chain termination codons UGA and UAA. The polypeptide is Peptide chain release factor 2 (prfB) (Listeria monocytogenes serotype 4b (strain F2365)).